The primary structure comprises 453 residues: Bifunctional protein GlmU (453 aa).

The tract at residues 1–225 (MNIVILAAGT…EWETLGVNSK (225 aa)) is pyrophosphorylase. Residues 6–9 (LAAG), Lys-20, Gln-71, 76–77 (GT), 98–100 (YGD), Gly-135, Glu-150, Asn-165, and Asn-223 each bind UDP-N-acetyl-alpha-D-glucosamine. Asp-100 is a binding site for Mg(2+). Residue Asn-223 coordinates Mg(2+). Residues 226–246 (QQLAELERIHQHNVADALLVA) are linker. An N-acetyltransferase region spans residues 247 to 453 (GVTLADPARL…GYVRPTKKKS (207 aa)). UDP-N-acetyl-alpha-D-glucosamine is bound by residues Arg-329 and Lys-347. The active-site Proton acceptor is the His-359. The UDP-N-acetyl-alpha-D-glucosamine site is built by Tyr-362 and Asn-373. Acetyl-CoA is bound by residues Ala-376, 382 to 383 (NY), Ser-401, and Ala-419.

It in the N-terminal section; belongs to the N-acetylglucosamine-1-phosphate uridyltransferase family. In the C-terminal section; belongs to the transferase hexapeptide repeat family. In terms of assembly, homotrimer. Mg(2+) serves as cofactor.

The protein localises to the cytoplasm. The enzyme catalyses alpha-D-glucosamine 1-phosphate + acetyl-CoA = N-acetyl-alpha-D-glucosamine 1-phosphate + CoA + H(+). The catalysed reaction is N-acetyl-alpha-D-glucosamine 1-phosphate + UTP + H(+) = UDP-N-acetyl-alpha-D-glucosamine + diphosphate. It functions in the pathway nucleotide-sugar biosynthesis; UDP-N-acetyl-alpha-D-glucosamine biosynthesis; N-acetyl-alpha-D-glucosamine 1-phosphate from alpha-D-glucosamine 6-phosphate (route II): step 2/2. It participates in nucleotide-sugar biosynthesis; UDP-N-acetyl-alpha-D-glucosamine biosynthesis; UDP-N-acetyl-alpha-D-glucosamine from N-acetyl-alpha-D-glucosamine 1-phosphate: step 1/1. The protein operates within bacterial outer membrane biogenesis; LPS lipid A biosynthesis. Its function is as follows. Catalyzes the last two sequential reactions in the de novo biosynthetic pathway for UDP-N-acetylglucosamine (UDP-GlcNAc). The C-terminal domain catalyzes the transfer of acetyl group from acetyl coenzyme A to glucosamine-1-phosphate (GlcN-1-P) to produce N-acetylglucosamine-1-phosphate (GlcNAc-1-P), which is converted into UDP-GlcNAc by the transfer of uridine 5-monophosphate (from uridine 5-triphosphate), a reaction catalyzed by the N-terminal domain. The polypeptide is Bifunctional protein GlmU (Paraburkholderia phytofirmans (strain DSM 17436 / LMG 22146 / PsJN) (Burkholderia phytofirmans)).